The chain runs to 401 residues: Homocitrate synthase (401 aa).

Residues 22-271 (VRFCDTTLRD…KLPIDLDTTS (250 aa)) enclose the Pyruvate carboxyltransferase domain. The segment at 367–401 (TRHKRGLDSRDLPGTSRAGRDAGPRAGTPTREEPV) is disordered.

Belongs to the alpha-IPM synthase/homocitrate synthase family.

It catalyses the reaction acetyl-CoA + 2-oxoglutarate + H2O = (2R)-homocitrate + CoA + H(+). This protein is a Fe-Mo-cofactor biosynthetic component. The sequence is that of Homocitrate synthase (nifV) from Frankia sp. (strain FaC1).